Here is a 310-residue protein sequence, read N- to C-terminus: Membrane protein insertase YidC 2 (310 aa).

The first 23 residues, Met1–Gly23, serve as a signal peptide directing secretion. Residue Cys24 is the site of N-palmitoyl cysteine attachment. The S-diacylglycerol cysteine moiety is linked to residue Cys24. 5 helical membrane passes run Pro33–Ala53, Leu58–Leu78, Phe135–Phe155, Leu180–Pro200, and Val219–Phe239. The tract at residues Glu262–Gly310 is disordered. Polar residues predominate over residues Thr281 to Lys297. The span at Lys298 to Gly310 shows a compositional bias: basic residues.

The protein belongs to the OXA1/ALB3/YidC family. Type 2 subfamily.

It is found in the cell membrane. In terms of biological role, required for the insertion and/or proper folding and/or complex formation of integral membrane proteins into the membrane. Involved in integration of membrane proteins that insert both dependently and independently of the Sec translocase complex, as well as at least some lipoproteins. This chain is Membrane protein insertase YidC 2, found in Streptococcus agalactiae serotype III (strain NEM316).